Reading from the N-terminus, the 108-residue chain is MSGGSSRRYPPELRERAVRMVAEIRGQHDSEWAAISEVARLLGVGCAETVRKWVRQAQVDAGARPGTTTEESAELKRLRRDNAELRRANAILKTASAFFAAELDRPAR.

The protein belongs to the transposase 8 family.

The sequence is that of Insertion element IS6110 uncharacterized 12.0 kDa protein from Mycobacterium bovis (strain ATCC BAA-935 / AF2122/97).